A 197-amino-acid chain; its full sequence is MKTAVIASLIAGAAAFAPAKNAARTSVATNMAFEDELGAQPPLGFFDPLGLVADGDQEKFDRLRYVEIKHGRISMLAVVGYLVQEAGVRLPGTIDYSGKTFAEIPSLAAFKEIPAGGLVQLLFFIGVLESSVMRDLTGEAEFVGDFRNGAIDFGWDTFDEETQFKKRAIELNQGRAAQMGILALMVHEQLGVSLLPQ.

The transit peptide at 1–31 (MKTAVIASLIAGAAAFAPAKNAARTSVATNM) directs the protein to the chloroplast. A run of 3 helical transmembrane segments spans residues 73-94 (ISMLAVVGYLVQEAGVRLPGTI), 114-133 (PAGGLVQLLFFIGVLESSVM), and 174-196 (GRAAQMGILALMVHEQLGVSLLP).

This sequence belongs to the fucoxanthin chlorophyll protein family. As to quaternary structure, the LHC complex of chromophytic algae is composed of fucoxanthin, chlorophyll A and C bound non-covalently by fucoxanthin chlorophyll proteins (FCPs). The ratio of the pigments in LHC; fucoxanthin: chlorophyll C: chlorophyll A; (0.6-1): (0.1-0.3): (1).

The protein localises to the plastid. Its subcellular location is the chloroplast thylakoid membrane. In terms of biological role, the light-harvesting complex (LHC) functions as a light receptor, it captures and delivers excitation energy to photosystems with which it is closely associated. Energy is transferred from the carotenoid and chlorophyll C (or B) to chlorophyll A and the photosynthetic reaction centers where it is used to synthesize ATP and reducing power. This chain is Fucoxanthin-chlorophyll a-c binding protein D, chloroplastic (FCPD), found in Phaeodactylum tricornutum (Diatom).